We begin with the raw amino-acid sequence, 212 residues long: Ribonuclease HII (212 aa).

An RNase H type-2 domain is found at 1–204 (MRVGIDEAGR…LRSTAPLYYI (204 aa)). The a divalent metal cation site is built by D6, E7, and D103.

The protein belongs to the RNase HII family. Mn(2+) is required as a cofactor. The cofactor is Mg(2+).

The protein resides in the cytoplasm. The enzyme catalyses Endonucleolytic cleavage to 5'-phosphomonoester.. In terms of biological role, endonuclease that specifically degrades the RNA of RNA-DNA hybrids. The polypeptide is Ribonuclease HII (Saccharolobus solfataricus (strain ATCC 35092 / DSM 1617 / JCM 11322 / P2) (Sulfolobus solfataricus)).